The following is a 1036-amino-acid chain: uncharacterized protein (1036 aa).

The next 2 helical transmembrane spans lie at Y4–L24 and I1004–L1024.

It belongs to the MG414/MG415 family.

It is found in the cell membrane. This is an uncharacterized protein from Mycoplasma genitalium (strain ATCC 33530 / DSM 19775 / NCTC 10195 / G37) (Mycoplasmoides genitalium).